We begin with the raw amino-acid sequence, 348 residues long: Sulfate/thiosulfate import ATP-binding protein CysA (348 aa).

The region spanning 3–233 is the ABC transporter domain; it reads ILIDNISKKF…PATPFVFSLL (231 aa). An ATP-binding site is contributed by 35–42; the sequence is GPSGSGKS.

The protein belongs to the ABC transporter superfamily. Sulfate/tungstate importer (TC 3.A.1.6) family.

The protein resides in the plastid. Its subcellular location is the chloroplast. The enzyme catalyses sulfate(out) + ATP + H2O = sulfate(in) + ADP + phosphate + H(+). The catalysed reaction is thiosulfate(out) + ATP + H2O = thiosulfate(in) + ADP + phosphate + H(+). Part of the ABC transporter complex involved in sulfate/thiosulfate import. Responsible for energy coupling to the transport system. This Mesostigma viride (Green alga) protein is Sulfate/thiosulfate import ATP-binding protein CysA.